A 446-amino-acid chain; its full sequence is Exodeoxyribonuclease 7 large subunit (446 aa).

It belongs to the XseA family. Heterooligomer composed of large and small subunits.

The protein localises to the cytoplasm. It catalyses the reaction Exonucleolytic cleavage in either 5'- to 3'- or 3'- to 5'-direction to yield nucleoside 5'-phosphates.. Functionally, bidirectionally degrades single-stranded DNA into large acid-insoluble oligonucleotides, which are then degraded further into small acid-soluble oligonucleotides. In Staphylococcus carnosus (strain TM300), this protein is Exodeoxyribonuclease 7 large subunit.